Here is a 396-residue protein sequence, read N- to C-terminus: Putative N(4)-(beta-N-acetylglucosaminyl)-L-asparaginase GG24090 (396 aa).

The first 23 residues, 1 to 23, serve as a signal peptide directing secretion; it reads MKRHLGTCLWVLCLASTAFSSLA. 2 cysteine pairs are disulfide-bonded: Cys-100/Cys-105 and Cys-199/Cys-215. Thr-246 functions as the Nucleophile in the catalytic mechanism. Residues 274 to 277 and 297 to 300 each bind substrate; these read RVGD and TGDG. The cysteines at positions 357 and 384 are disulfide-linked.

The protein belongs to the Ntn-hydrolase family. As to quaternary structure, heterotetramer of two alpha and two beta chains arranged as a dimer of alpha/beta heterodimers. Post-translationally, cleaved into an alpha and beta chain by autocatalysis; this activates the enzyme. The N-terminal residue of the beta subunit is responsible for the nucleophile hydrolase activity.

It catalyses the reaction N(4)-(beta-N-acetyl-D-glucosaminyl)-L-asparagine + H2O = N-acetyl-beta-D-glucosaminylamine + L-aspartate + H(+). Cleaves the GlcNAc-Asn bond which joins oligosaccharides to the peptide of asparagine-linked glycoproteins. The polypeptide is Putative N(4)-(beta-N-acetylglucosaminyl)-L-asparaginase GG24090 (Drosophila erecta (Fruit fly)).